The following is a 555-amino-acid chain: Urocanate hydratase (555 aa).

NAD(+) contacts are provided by residues 52–53 (GG), Gln130, 176–178 (GMG), Glu196, Arg201, 242–243 (NA), 263–267 (QTSAH), 273–274 (YL), and Tyr322. The active site involves Cys410. An NAD(+)-binding site is contributed by Gly492.

The protein belongs to the urocanase family. Requires NAD(+) as cofactor.

It localises to the cytoplasm. The enzyme catalyses 4-imidazolone-5-propanoate = trans-urocanate + H2O. Its pathway is amino-acid degradation; L-histidine degradation into L-glutamate; N-formimidoyl-L-glutamate from L-histidine: step 2/3. Its function is as follows. Catalyzes the conversion of urocanate to 4-imidazolone-5-propionate. This Shewanella baltica (strain OS155 / ATCC BAA-1091) protein is Urocanate hydratase.